Consider the following 452-residue polypeptide: Cell division protein FtsZ (452 aa).

GTP-binding positions include 24-28, 111-113, Glu142, Arg146, and Asp190; these read GAGSN and GTG.

The protein belongs to the FtsZ family. As to quaternary structure, homodimer. Polymerizes to form a dynamic ring structure in a strictly GTP-dependent manner. Interacts directly with several other division proteins.

The protein resides in the cytoplasm. In terms of biological role, essential cell division protein that forms a contractile ring structure (Z ring) at the future cell division site. The regulation of the ring assembly controls the timing and the location of cell division. One of the functions of the FtsZ ring is to recruit other cell division proteins to the septum to produce a new cell wall between the dividing cells. Binds GTP and shows GTPase activity. The chain is Cell division protein FtsZ from Rickettsia prowazekii (strain Madrid E).